The sequence spans 564 residues: Ribonuclease J (564 aa).

Zn(2+) is bound by residues histidine 85, histidine 87, aspartate 89, histidine 90, histidine 153, and aspartate 175. 375 to 379 (HVSGH) provides a ligand contact to substrate. Residue histidine 401 coordinates Zn(2+).

The protein belongs to the metallo-beta-lactamase superfamily. RNA-metabolizing metallo-beta-lactamase-like family. Bacterial RNase J subfamily. As to quaternary structure, homodimer, may be a subunit of the RNA degradosome. Requires Zn(2+) as cofactor.

It is found in the cytoplasm. Functionally, an RNase that has 5'-3' exonuclease and possibly endonuclease activity. Plays a role in 16S and 23S rRNA processing. Might have a role in mRNA maturation and/or decay. This chain is Ribonuclease J, found in Sinorhizobium meliloti (strain Sm2011 / Rm2011 / 2011).